Consider the following 415-residue polypeptide: Putative transcription factor BOFH (415 aa).

The tract at residues serine 159–aspartate 221 is disordered. The span at isoleucine 174–tryptophan 183 shows a compositional bias: gly residues. A compositionally biased stretch (basic residues) spans glutamine 193–leucine 202. Residues glutamate 206–methionine 220 are compositionally biased toward acidic residues. 3 consecutive DNA-binding regions follow at residues arginine 234–phenylalanine 238, asparagine 303–tyrosine 310, and tyrosine 374–threonine 377.

This sequence belongs to the FLO/LFY family. In terms of tissue distribution, acts in the floral primordia.

The protein resides in the nucleus. Its function is as follows. Controls floral meristem identity. Is required very early in flower development and may act here as a transcription factor. The chain is Putative transcription factor BOFH from Brassica oleracea var. botrytis (Cauliflower).